A 346-amino-acid chain; its full sequence is Histidinol-phosphate aminotransferase (346 aa).

Lys-209 bears the N6-(pyridoxal phosphate)lysine mark.

Belongs to the class-II pyridoxal-phosphate-dependent aminotransferase family. Histidinol-phosphate aminotransferase subfamily. In terms of assembly, homodimer. The cofactor is pyridoxal 5'-phosphate.

The catalysed reaction is L-histidinol phosphate + 2-oxoglutarate = 3-(imidazol-4-yl)-2-oxopropyl phosphate + L-glutamate. Its pathway is amino-acid biosynthesis; L-histidine biosynthesis; L-histidine from 5-phospho-alpha-D-ribose 1-diphosphate: step 7/9. The polypeptide is Histidinol-phosphate aminotransferase (Aliivibrio fischeri (strain MJ11) (Vibrio fischeri)).